An 87-amino-acid polypeptide reads, in one-letter code: Exodeoxyribonuclease 7 small subunit (87 aa).

This sequence belongs to the XseB family. As to quaternary structure, heterooligomer composed of large and small subunits.

It localises to the cytoplasm. It catalyses the reaction Exonucleolytic cleavage in either 5'- to 3'- or 3'- to 5'-direction to yield nucleoside 5'-phosphates.. Its function is as follows. Bidirectionally degrades single-stranded DNA into large acid-insoluble oligonucleotides, which are then degraded further into small acid-soluble oligonucleotides. This Serratia proteamaculans (strain 568) protein is Exodeoxyribonuclease 7 small subunit.